Here is a 302-residue protein sequence, read N- to C-terminus: N-acetyl-D-glucosamine kinase (302 aa).

ATP-binding positions include G4 to K11 and G133 to L139. Positions 156, 176, 178, and 183 each coordinate Zn(2+).

This sequence belongs to the ROK (NagC/XylR) family. NagK subfamily.

It carries out the reaction N-acetyl-D-glucosamine + ATP = N-acetyl-D-glucosamine 6-phosphate + ADP + H(+). Its pathway is cell wall biogenesis; peptidoglycan recycling. Its function is as follows. Catalyzes the phosphorylation of N-acetyl-D-glucosamine (GlcNAc) derived from cell-wall degradation, yielding GlcNAc-6-P. This is N-acetyl-D-glucosamine kinase from Salmonella typhi.